The sequence spans 256 residues: 2-C-methyl-D-erythritol 4-phosphate cytidylyltransferase (256 aa).

It belongs to the IspD/TarI cytidylyltransferase family. IspD subfamily.

It catalyses the reaction 2-C-methyl-D-erythritol 4-phosphate + CTP + H(+) = 4-CDP-2-C-methyl-D-erythritol + diphosphate. It functions in the pathway isoprenoid biosynthesis; isopentenyl diphosphate biosynthesis via DXP pathway; isopentenyl diphosphate from 1-deoxy-D-xylulose 5-phosphate: step 2/6. Its function is as follows. Catalyzes the formation of 4-diphosphocytidyl-2-C-methyl-D-erythritol from CTP and 2-C-methyl-D-erythritol 4-phosphate (MEP). This is 2-C-methyl-D-erythritol 4-phosphate cytidylyltransferase from Corynebacterium glutamicum (strain ATCC 13032 / DSM 20300 / JCM 1318 / BCRC 11384 / CCUG 27702 / LMG 3730 / NBRC 12168 / NCIMB 10025 / NRRL B-2784 / 534).